Consider the following 656-residue polypeptide: uncharacterized protein (656 aa).

2 disordered regions span residues 1 to 41 (MMAT…ESEG) and 60 to 88 (SNKV…HNLE). Residues 22 to 36 (SDSSDSGSDVSFFSV) show a composition bias toward low complexity. Serine 39 carries the post-translational modification Phosphoserine. Residues 62-78 (KVEKDSDSEQRGRKKET) show a composition bias toward basic and acidic residues.

It localises to the cytoplasm. The protein resides in the mitochondrion. This is an uncharacterized protein from Saccharomyces cerevisiae (strain ATCC 204508 / S288c) (Baker's yeast).